The following is a 744-amino-acid chain: MAGRSMQAARCPTDELSLSNCAVVSEKDYQSGQHVIVRTSPNHKYIFTLRTHPSVVPGSVAFSLPQRKWAGLSIGQEIEVALYSFDKAKQCIGTMTIEIDFLQKKNIDSNPYDTDKMAAEFIQQFNNQAFSVGQQLVFSFNDKLFGLLVKDIEAMDPSILKGEPASGKRQKIEVGLVVGNSQVAFEKAENSSLNLIGKAKTKENRQSIINPDWNFEKMGIGGLDKEFSDIFRRAFASRVFPPEIVEQMGCKHVKGILLYGPPGCGKTLLARQIGKMLNAREPKVVNGPEILNKYVGESEANIRKLFADAEEEQRRLGANSGLHIIIFDEIDAICKQRGSMAGSTGVHDTVVNQLLSKIDGVEQLNNILVIGMTNRPDLIDEALLRPGRLEVKMEIGLPDEKGRLQILHIHTARMRGHQLLSADVDIKELAVETKNFSGAELEGLVRAAQSTAMNRHIKASTKVEVDMEKAESLQVTRGDFLASLENDIKPAFGTNQEDYASYIMNGIIKWGDPVTRVLDDGELLVQQTKNSDRTPLVSVLLEGPPHSGKTALAAKIAEESNFPFIKICSPDKMIGFSETAKCQAMKKIFDDAYKSQLSCVVVDDIERLLDYVPIGPRFSNLVLQALLVLLKKAPPQGRKLLIIGTTSRKDVLQEMEMLNAFSTTIHVPNIATGEQLLEALELLGNFKDKERTTIAQQVKGKKVWIGIKKLLMLIEMSLQMDPEYRVRKFLALLREEGASPLDFD.

K105 carries the N6-acetyllysine modification. S207 carries the post-translational modification Phosphoserine. At Y259 the chain carries Phosphotyrosine. Residues 505–510 (NGIIKW) and 545–552 (PHSGKTAL) contribute to the ATP site. T550 contacts Mg(2+). Phosphoserine; by CDK16 is present on S569.

The protein belongs to the AAA ATPase family. Homohexamer. Interacts with GABARAP and GABARAPL2. Interacts with GRIA2. Interacts with PLK2, leading to disrupt the interaction with GRIA2. Interacts with MUSK; may regulate MUSK endocytosis and activity. Interacts with CDK16. Requires Mg(2+) as cofactor. Post-translationally, phosphorylation at Ser-569 interferes with homohexamerization.

The protein localises to the cytoplasm. It carries out the reaction ATP + H2O = ADP + phosphate + H(+). Required for vesicle-mediated transport. Catalyzes the fusion of transport vesicles within the Golgi cisternae. Is also required for transport from the endoplasmic reticulum to the Golgi stack. Seems to function as a fusion protein required for the delivery of cargo proteins to all compartments of the Golgi stack independent of vesicle origin. Interaction with AMPAR subunit GRIA2 leads to influence GRIA2 membrane cycling. The chain is Vesicle-fusing ATPase (NSF) from Cricetulus griseus (Chinese hamster).